We begin with the raw amino-acid sequence, 132 residues long: Translation initiation factor 5A (132 aa).

Lys-36 bears the Hypusine mark.

Belongs to the eIF-5A family.

The protein localises to the cytoplasm. Functionally, functions by promoting the formation of the first peptide bond. The polypeptide is Translation initiation factor 5A (eIF5A) (Pyrobaculum islandicum (strain DSM 4184 / JCM 9189 / GEO3)).